A 692-amino-acid polypeptide reads, in one-letter code: MAREFSLEKTRNIGIMAHVDAGKTTTTERILYYTGKIHKIGETHEGASQMDWMEQEQERGITITSAATTAQWDGHRVNIIDTPGHVDFTIEVQRSLRVLDGAVTVLDAQSGVEPQTETVWRQATEYGVPRIVFANKMDKIGADFLYSVQSLHDRLQANAHPIQLPIGSEDDFRGIIDLIKMKAEIYTNDLGTDILEEDIPAEYVDQANEYREKLVEAVADTDEDLMMKYLEGEEITNEELMAAIRRATINVEFYPVLCGSAFKNKGVQLMLDAVIDYLPSPLDIPAIKGINPDTDEEETRPASDEEPFAALAFKIMTDPFVGRLTFFRVYSGVLNSGSYVLNTSKGKRERIGRILQMHANSRQEIETVYAGDIAAAVGLKDTTTGDSLTDEKSKVILESIEVPEPVIQLMVEPKSKADQDKMGIALQKLAEEDPTFRVETNVETGETVISGMGELHLDVLVDRMKREFKVEANVGAPQVSYRETFRASTQARGFFKRQSGGKGQFGDVWIEFTPNEEGKGFEFENAIVGGVVPREFIPAVEKGLVESMANGVLAGYPMVDVKAKLYDGSYHDVDSSETAFKIAASLALKEAAKSAQPAILEPMMLVTITAPEDNLGDVMGHVTARRGRVDGMEARGNTQVVRAFVPLAEMFGYATVLRSATQGRGTFMMVFDHYEDVPKSVQEEIIKKNSGE.

The tr-type G domain occupies 8-282 (EKTRNIGIMA…AVIDYLPSPL (275 aa)). GTP-binding positions include 17 to 24 (AHVDAGKT), 81 to 85 (DTPGH), and 135 to 138 (NKMD).

Belongs to the TRAFAC class translation factor GTPase superfamily. Classic translation factor GTPase family. EF-G/EF-2 subfamily.

Its subcellular location is the cytoplasm. Its function is as follows. Catalyzes the GTP-dependent ribosomal translocation step during translation elongation. During this step, the ribosome changes from the pre-translocational (PRE) to the post-translocational (POST) state as the newly formed A-site-bound peptidyl-tRNA and P-site-bound deacylated tRNA move to the P and E sites, respectively. Catalyzes the coordinated movement of the two tRNA molecules, the mRNA and conformational changes in the ribosome. In Streptococcus agalactiae serotype III (strain NEM316), this protein is Elongation factor G.